The following is a 305-amino-acid chain: 2-oxoacid:ferredoxin oxidoreductase subunit beta (305 aa).

Cys-12, Cys-15, and Cys-46 together coordinate [4Fe-4S] cluster. Thiamine diphosphate-binding positions include 44–47 (IGCS) and His-65. Residue Asp-90 participates in Mg(2+) binding. 91–92 (GD) provides a ligand contact to thiamine diphosphate. Residues Asn-118 and Val-120 each coordinate Mg(2+). Position 122 to 123 (122 to 123 (GL)) interacts with thiamine diphosphate. Cys-197 contributes to the [4Fe-4S] cluster binding site.

In terms of assembly, heterodimer composed of an alpha and a beta subunit. Requires [4Fe-4S] cluster as cofactor. Thiamine diphosphate is required as a cofactor. It depends on Mg(2+) as a cofactor.

It localises to the cytoplasm. The catalysed reaction is a 2-oxocarboxylate + 2 oxidized [2Fe-2S]-[ferredoxin] + CoA = an acyl-CoA + 2 reduced [2Fe-2S]-[ferredoxin] + CO2 + H(+). Catalyzes the coenzyme A-dependent oxidative decarboxylation of different 2-oxoacids such as 2-oxoglutarate, pyruvate and 2-oxobutyrate to form their CoA derivatives. The protein is 2-oxoacid:ferredoxin oxidoreductase subunit beta of Sulfolobus sp.